Here is a 2883-residue protein sequence, read N- to C-terminus: Bifunctional DNA-directed RNA polymerase subunit beta-beta' (2883 aa).

The tract at residues 1-1377 is DNA-directed RNA polymerase subunit beta; the sequence is MPTTLKSGNR…DVTVYGETEE (1377 aa). A DNA-directed RNA polymerase subunit beta' region spans residues 1382 to 2883; the sequence is PMPIKEDDRP…IRIKEKTEGA (1502 aa). 4 residues coordinate Zn(2+): Cys1447, Cys1449, Cys1462, and Cys1465. Asp1846, Asp1848, and Asp1850 together coordinate Mg(2+). The Zn(2+) site is built by Cys2176, Cys2250, Cys2257, and Cys2260.

This sequence in the N-terminal section; belongs to the RNA polymerase beta chain family. The protein in the C-terminal section; belongs to the RNA polymerase beta' chain family. In terms of assembly, the RNAP catalytic core consists of 2 alpha, 1 beta/beta' and 1 omega subunit. When a sigma factor is associated with the core the holoenzyme is formed, which can initiate transcription. The cofactor is Mg(2+). Zn(2+) serves as cofactor.

It catalyses the reaction RNA(n) + a ribonucleoside 5'-triphosphate = RNA(n+1) + diphosphate. Its function is as follows. DNA-dependent RNA polymerase catalyzes the transcription of DNA into RNA using the four ribonucleoside triphosphates as substrates. In Wolinella succinogenes (strain ATCC 29543 / DSM 1740 / CCUG 13145 / JCM 31913 / LMG 7466 / NCTC 11488 / FDC 602W) (Vibrio succinogenes), this protein is Bifunctional DNA-directed RNA polymerase subunit beta-beta' (rpoBC).